The following is a 352-amino-acid chain: Sulfate-binding protein (352 aa).

The signal sequence occupies residues 1 to 40 (MARSAFGWGFSVIAVLMVGSITACNTTTTTEPGQGENASQ).

The protein belongs to the prokaryotic sulfate-binding protein family.

It is found in the periplasm. Its function is as follows. This protein specifically binds sulfate and is involved in its transmembrane transport. This chain is Sulfate-binding protein (sbpA), found in Synechocystis sp. (strain ATCC 27184 / PCC 6803 / Kazusa).